The following is a 228-amino-acid chain: Protein CWC15 homolog A (228 aa).

The tract at residues 1–126 is disordered; the sequence is MTTAARPTFE…DEDSDDDTAA (126 aa). The span at 24–34 shows a compositional bias: polar residues; that stretch reads SQLSKQYSSRD. Over residues 52–84 the composition is skewed to basic and acidic residues; sequence EEVRSRDFRRELEERERVVARDKNRDRPTREHT. The span at 102–124 shows a compositional bias: acidic residues; it reads DADDPLTDEDGDEDSDEDSDDDT. Residues 121–165 are a coiled coil; the sequence is DDDTAALLAELEKIKKERAEEKDRKELEQKAEEERIRMENILSGN.

Belongs to the CWC15 family. As to quaternary structure, identified in the spliceosome C complex. Component of the minor spliceosome, which splices U12-type introns.

The protein resides in the nucleus. Functionally, involved in pre-mRNA splicing as component of the spliceosome. In Xenopus laevis (African clawed frog), this protein is Protein CWC15 homolog A (cwc15-a).